The primary structure comprises 706 residues: MADTLEFNEIYQEVKGSMNDGRLRLSRQGVIFKNSKTGKVDNIQASELAEGVWRRVALGHGLKLLTKNGHVYKYDGFRESEFDKLSDFFKAHYRLELAEKDLCVKGWNWGTVRFGGQLLSFDIGEQPVFEIPLSNVSQCTTGKNEVTLEFHQNDDAEVSLMEVRFYVPPTQEDGVDPVEAFAQNVLSKADVIQATGDAICIFRELQCLTPRGRYDIRIYPTFLHLHGKTFDYKIPYTTVLRLFLLPHKDQRQMFFVISLDPPIKQGQTRYHFLILLFSKDEDISLTLNMNEEEVEKRFEGRLTKNMSGSLYEMVSRVMKALVNRKITVPGNFQGHSGAQCITCSYKASSGLLYPLERGFIYVHKPPVHIRFDEISFVNFARGTTTTRSFDFEIETKQGTQYTFSSIEREEYGKLFDFVNAKKLNIKNRGLKEGMKQSYDEYADSDEDQHDAYLERMKEEGKIREENANDSSDGSGEETDESFNPGEEDDDVAEEFDSNASASSSSGDGDSDRGEKKPAKKAKIVKDRKPRKKQVESKKGKDPNAPKRPMSAYMLWLNANREKIKSDHPGISITDLSKKAGELWKAMSKEKKEEWDRKAEDAKRDYEKAMKEYSVGNKSESSKMERSKKKKKKQEKQMKGKGEKKGAASKSSSSTKSSAKTMSESFKSKEFVSSDESSSAESKKEDSEDESGASPAQSSEDSASGSD.

Disordered stretches follow at residues 458-551 and 587-706; these read EEGK…PMSA and SKEK…SGSD. Over residues 474–496 the composition is skewed to acidic residues; sequence SGEETDESFNPGEEDDDVAEEFD. The segment covering 497 to 507 has biased composition (low complexity); it reads SNASASSSSGD. A compositionally biased stretch (basic residues) spans 517-531; sequence PAKKAKIVKDRKPRK. Composition is skewed to basic and acidic residues over residues 532 to 544, 587 to 610, and 634 to 645; these read KQVE…DPNA, SKEK…KAMK, and EKQMKGKGEKKG. A DNA-binding region (HMG box) is located at residues 545 to 613; sequence PKRPMSAYML…DYEKAMKEYS (69 aa). The span at 647–664 shows a compositional bias: low complexity; that stretch reads ASKSSSSTKSSAKTMSES. The segment covering 693–706 has biased composition (polar residues); it reads SPAQSSEDSASGSD.

The protein belongs to the SSRP1 family. In terms of assembly, component of the FACT complex, a stable heterodimer of SSRP1 and SUPT16H. Also a component of a CK2-SPT16-SSRP1 complex which forms following UV irradiation, composed of SSRP1, SUPT16H, CSNK2A1, CSNK2A2 and CSNK2B.

It localises to the nucleus. The protein localises to the chromosome. It is found in the nucleolus. Functionally, component of the FACT complex, a general chromatin factor that acts to reorganize nucleosomes. The FACT complex is involved in multiple processes that require DNA as a template such as mRNA elongation, DNA replication and DNA repair. During transcription elongation the FACT complex acts as a histone chaperone that both destabilizes and restores nucleosomal structure. It facilitates the passage of RNA polymerase II and transcription by promoting the dissociation of one histone H2A-H2B dimer from the nucleosome, then subsequently promotes the reestablishment of the nucleosome following the passage of RNA polymerase II. Binds specifically to double-stranded DNA. In Gallus gallus (Chicken), this protein is FACT complex subunit SSRP1 (SSRP1).